We begin with the raw amino-acid sequence, 141 residues long: MKSFIVVLCCLFAITYGQTDLPAIRRNARFQRNLALVALHNQIFGAEGVENGLAKTQEEKVCILNVKEAALEEGNIVLDETVGKIIPEVERLSTSGTEAEIKAFLDKTDYPAYKKSAMNEFKQKIMTWIPAVQGKMAACRK.

Positions 1–17 (MKSFIVVLCCLFAITYG) are cleaved as a signal peptide. C62 and C139 are disulfide-bonded.

Belongs to the insect vpf1 family. As to expression, expressed by the venom gland (posterior main gland) (at protein level).

The protein localises to the secreted. In Platymeris rhadamanthus (Red spot assassin bug), this protein is Venom protein family 1 protein 1.